A 462-amino-acid chain; its full sequence is Trigger factor (462 aa).

A PPIase FKBP-type domain is found at 172-257 (GDKATIDFVG…LKALAAPGET (86 aa)). Residues 443 to 462 (LLAADEEDEEEAAESSAALV) are disordered. The segment covering 444-455 (LAADEEDEEEAA) has biased composition (acidic residues).

Belongs to the FKBP-type PPIase family. Tig subfamily.

Its subcellular location is the cytoplasm. It carries out the reaction [protein]-peptidylproline (omega=180) = [protein]-peptidylproline (omega=0). In terms of biological role, involved in protein export. Acts as a chaperone by maintaining the newly synthesized protein in an open conformation. Functions as a peptidyl-prolyl cis-trans isomerase. The chain is Trigger factor from Methylocella silvestris (strain DSM 15510 / CIP 108128 / LMG 27833 / NCIMB 13906 / BL2).